We begin with the raw amino-acid sequence, 468 residues long: Heparan-sulfate 6-O-sulfotransferase 2 (468 aa).

At 1–9 the chain is on the cytoplasmic side; sequence MDGKSNYSR. A helical; Signal-anchor for type II membrane protein transmembrane segment spans residues 10–30; it reads LLIALLMILFFGGIVLQYICS. Residues 31 to 468 lie on the Lumenal side of the membrane; the sequence is TSDWQLLHLA…DYLENVEQWR (438 aa). N-linked (GlcNAc...) asparagine glycosylation is present at Asn79. 103–111 contributes to the 3'-phosphoadenylyl sulfate binding site; sequence HIQKTGGTT. Substrate is bound by residues 133–134, Arg150, Trp155, and His160; that span reads KK. Catalysis depends on His160, which acts as the Proton acceptor. 2 residues coordinate 3'-phosphoadenylyl sulfate: Arg197 and Ser205. Residues His209 and Trp216 each contribute to the substrate site. Asn276 carries an N-linked (GlcNAc...) asparagine glycan. Position 329–331 (329–331) interacts with 3'-phosphoadenylyl sulfate; the sequence is TQL. Residue Asn332 is glycosylated (N-linked (GlcNAc...) asparagine). A 3'-phosphoadenylyl sulfate-binding site is contributed by 335 to 336; the sequence is RA. The segment at 409–447 is disordered; it reads FKPTKEPPMTEQSPAFAEEKQADAERTLESETEGQVEEN. The span at 425-437 shows a compositional bias: basic and acidic residues; it reads AEEKQADAERTLE. Residues 438–447 are compositionally biased toward acidic residues; sequence SETEGQVEEN.

It belongs to the sulfotransferase 6 family. As to expression, expressed ubiquitously during gastrulation. During early somitogenesis, strong expression in head and presumptive brain. During mid-somitogenesis, strong expression in eye, hindbrain and somitic boundaries and weak expression in tail bud. During late somitogenesis, strong expression in eye, hindbrain, branchial arch primordia, spinal cord and ventral medial somites. At 24 hours post-fertilization (hpf), strong expression throughout the head, with expression receeding from the trunk spinal cord, ventral medial somites and somitic boundaries; expressed in cells surrounding vascular structures of the dorsal aorta and caudal vein in the tail. At 36 hpf, expressed in lens, optic stalk, hindbrain and pectoral fin. At 48 hpf, expressed in eye, brain, otic vesicle and branchial arches.

Its subcellular location is the membrane. The catalysed reaction is alpha-D-glucosaminyl-[heparan sulfate](n) + 3'-phosphoadenylyl sulfate = 6-sulfo-alpha-D-glucosaminyl-[heparan sulfate](n) + adenosine 3',5'-bisphosphate + H(+). In terms of biological role, 6-O-sulfation enzyme which catalyzes the transfer of sulfate from 3'-phosphoadenosine 5'-phosphosulfate (PAPS) to position 6 of the N-sulfoglucosamine residue (GlcNS) of heparan sulfate. Required for muscle development and angiogenesis. This is Heparan-sulfate 6-O-sulfotransferase 2 (hs6st2) from Danio rerio (Zebrafish).